Consider the following 85-residue polypeptide: Beta-insect depressant toxin BmKITb (85 aa).

Positions 1–21 (MKLFLLLVISASMLIDGLVNA) are cleaved as a signal peptide. Positions 22-82 (DGYIRGSNGC…TWKSESNTCG (61 aa)) constitute an LCN-type CS-alpha/beta domain. 4 disulfides stabilise this stretch: Cys31/Cys81, Cys35/Cys56, Cys42/Cys63, and Cys46/Cys65. The residue at position 82 (Gly82) is a Glycine amide.

Expressed by the venom gland.

It localises to the secreted. Functionally, depressant insect beta-toxins cause a transient contraction paralysis followed by a slow flaccid paralysis. They bind voltage-independently at site-4 of sodium channels (Nav) and shift the voltage of activation toward more negative potentials thereby affecting sodium channel activation and promoting spontaneous and repetitive firing. However, this toxin has some characteristics of excitatory toxins such as bursts of activity after the membrane has been hyperpolarized. This toxin is active only on insects. The chain is Beta-insect depressant toxin BmKITb from Olivierus martensii (Manchurian scorpion).